Consider the following 928-residue polypeptide: Dual serine/threonine and tyrosine protein kinase (928 aa).

Low complexity predominate over residues 1 to 14 (MEGDGVPWGSEPES). Disordered stretches follow at residues 1–22 (MEGDGVPWGSEPESGPGPGGGG) and 55–81 (LRGSQPRGCPSSPAEGGEAGRGPAGDV). A coiled-coil region spans residues 394-430 (RKKENELYESLMNIANRKQEEMKDMIVETLNTMKEEL). One can recognise a Protein kinase domain in the interval 651 to 905 (PKLGQELGRG…PLLGIVQPML (255 aa)). ATP-binding positions include 657-665 (LGRGQYGVV) and lysine 680. Aspartate 776 acts as the Proton acceptor in catalysis.

It belongs to the protein kinase superfamily. Ser/Thr protein kinase family.

The protein resides in the cytoplasm. It localises to the cell membrane. The protein localises to the apical cell membrane. Its subcellular location is the basolateral cell membrane. It is found in the cell junction. It carries out the reaction L-seryl-[protein] + ATP = O-phospho-L-seryl-[protein] + ADP + H(+). The catalysed reaction is L-threonyl-[protein] + ATP = O-phospho-L-threonyl-[protein] + ADP + H(+). The enzyme catalyses L-tyrosyl-[protein] + ATP = O-phospho-L-tyrosyl-[protein] + ADP + H(+). Functionally, acts as a positive regulator of ERK phosphorylation downstream of fibroblast growth factor-receptor activation. Involved in the regulation of both caspase-dependent apoptosis and caspase-independent cell death. In the skin, it plays a predominant role in suppressing caspase-dependent apoptosis in response to UV stress in a range of dermal cell types. The chain is Dual serine/threonine and tyrosine protein kinase (DSTYK) from Bos taurus (Bovine).